We begin with the raw amino-acid sequence, 215 residues long: Pyrrolidone-carboxylate peptidase 1 (215 aa).

Catalysis depends on residues glutamate 80, cysteine 143, and histidine 167.

The protein belongs to the peptidase C15 family. As to quaternary structure, homotetramer.

It is found in the cytoplasm. It carries out the reaction Release of an N-terminal pyroglutamyl group from a polypeptide, the second amino acid generally not being Pro.. In terms of biological role, removes 5-oxoproline from various penultimate amino acid residues except L-proline. This is Pyrrolidone-carboxylate peptidase 1 from Ralstonia nicotianae (strain ATCC BAA-1114 / GMI1000) (Ralstonia solanacearum).